We begin with the raw amino-acid sequence, 428 residues long: Adenylosuccinate synthetase (428 aa).

GTP contacts are provided by residues 12–18 (GDEGKGK) and 40–42 (GHT). The active-site Proton acceptor is the Asp13. Mg(2+)-binding residues include Asp13 and Gly40. IMP-binding positions include 13–16 (DEGK), 38–41 (NAGH), Thr128, Arg142, Gln223, Thr238, and Arg302. The Proton donor role is filled by His41. Residue 298 to 304 (TTTGRPR) coordinates substrate. GTP-binding positions include Arg304, 330 to 332 (SID), and 412 to 414 (SVG).

It belongs to the adenylosuccinate synthetase family. As to quaternary structure, homodimer. Mg(2+) serves as cofactor.

It is found in the cytoplasm. The catalysed reaction is IMP + L-aspartate + GTP = N(6)-(1,2-dicarboxyethyl)-AMP + GDP + phosphate + 2 H(+). It participates in purine metabolism; AMP biosynthesis via de novo pathway; AMP from IMP: step 1/2. Its function is as follows. Plays an important role in the de novo pathway of purine nucleotide biosynthesis. Catalyzes the first committed step in the biosynthesis of AMP from IMP. In Streptococcus pneumoniae serotype 2 (strain D39 / NCTC 7466), this protein is Adenylosuccinate synthetase.